Here is a 3164-residue protein sequence, read N- to C-terminus: Protein eyes shut homolog (3164 aa).

Positions methionine 1–glycine 21 are cleaved as a signal peptide. Asparagine 42, asparagine 105, asparagine 117, and asparagine 166 each carry an N-linked (GlcNAc...) asparagine glycan. 3 consecutive EGF-like domains span residues lysine 170–glutamine 212, glutamate 213–serine 254, and isoleucine 256–glutamate 292. 9 cysteine pairs are disulfide-bonded: cysteine 174–cysteine 189, cysteine 183–cysteine 200, cysteine 202–cysteine 211, cysteine 217–cysteine 228, cysteine 222–cysteine 242, cysteine 244–cysteine 253, cysteine 260–cysteine 270, cysteine 265–cysteine 280, and cysteine 282–cysteine 291. Residues asparagine 225, asparagine 252, asparagine 269, and asparagine 272 are each glycosylated (N-linked (GlcNAc...) asparagine). 2 N-linked (GlcNAc...) asparagine glycosylation sites follow: asparagine 311 and asparagine 343. 2 consecutive EGF-like domains span residues aspartate 332–lysine 368 and isoleucine 370–glutamate 406. Cystine bridges form between cysteine 336/cysteine 347, cysteine 341/cysteine 356, cysteine 358/cysteine 367, cysteine 374/cysteine 385, and cysteine 396/cysteine 405. Asparagine 382 carries an N-linked (GlcNAc...) asparagine glycan. 3 N-linked (GlcNAc...) asparagine glycosylation sites follow: asparagine 506, asparagine 521, and asparagine 566. The EGF-like 6 domain maps to threonine 567–valine 602. Disulfide bonds link cysteine 575–cysteine 590 and cysteine 592–cysteine 601. N-linked (GlcNAc...) asparagine glycosylation is found at asparagine 611 and asparagine 654. The EGF-like 7 domain maps to aspartate 643–glutamate 679. Cystine bridges form between cysteine 652–cysteine 667, cysteine 685–cysteine 696, cysteine 690–cysteine 705, cysteine 707–cysteine 719, cysteine 737–cysteine 748, and cysteine 742–cysteine 757. Residues aspartate 681–leucine 720 form the EGF-like 8; calcium-binding domain. Residues aspartate 733 to glutamate 769 form the EGF-like 9; calcium-binding domain. N-linked (GlcNAc...) asparagine glycosylation is found at asparagine 745, asparagine 766, asparagine 782, asparagine 783, and asparagine 805. Positions glutamate 771–serine 807 constitute an EGF-like 10; calcium-binding domain. Cystine bridges form between cysteine 775/cysteine 786, cysteine 780/cysteine 795, cysteine 797/cysteine 806, cysteine 813/cysteine 824, cysteine 818/cysteine 835, cysteine 837/cysteine 846, cysteine 853/cysteine 866, cysteine 860/cysteine 876, cysteine 878/cysteine 887, cysteine 894/cysteine 905, cysteine 899/cysteine 914, cysteine 916/cysteine 925, cysteine 932/cysteine 943, cysteine 937/cysteine 952, cysteine 954/cysteine 963, cysteine 970/cysteine 981, cysteine 975/cysteine 990, cysteine 992/cysteine 1001, cysteine 1008/cysteine 1019, cysteine 1013/cysteine 1028, cysteine 1030/cysteine 1039, cysteine 1046/cysteine 1056, cysteine 1051/cysteine 1065, cysteine 1067/cysteine 1076, cysteine 1083/cysteine 1094, cysteine 1088/cysteine 1103, cysteine 1105/cysteine 1114, cysteine 1121/cysteine 1137, cysteine 1131/cysteine 1147, cysteine 1149/cysteine 1158, cysteine 1165/cysteine 1176, cysteine 1170/cysteine 1185, and cysteine 1187/cysteine 1196. EGF-like domains follow at residues glutamate 809–histidine 847, arginine 849–glutamate 888, and aspartate 890–glutamate 926. Asparagine 862 and asparagine 863 each carry an N-linked (GlcNAc...) asparagine glycan. The EGF-like 14; calcium-binding domain maps to glutamate 928–glutamate 964. Asparagine 940 carries an N-linked (GlcNAc...) asparagine glycan. One can recognise an EGF-like 15 domain in the interval aspartate 966 to glutamate 1002. Residues asparagine 1004–glutamate 1040 form the EGF-like 16; calcium-binding domain. 3 consecutive EGF-like domains span residues asparagine 1042 to lysine 1077, lysine 1079 to glutamate 1115, and serine 1117 to glutamate 1159. The EGF-like 20; calcium-binding domain occupies asparagine 1161–glutamate 1197. N-linked (GlcNAc...) asparagine glycosylation is found at asparagine 1509, asparagine 1522, asparagine 1906, asparagine 1941, asparagine 1960, and asparagine 2033. Positions phenylalanine 1883–cysteine 2063 constitute a Laminin G-like 1 domain. 4 cysteine pairs are disulfide-bonded: cysteine 2037/cysteine 2063, cysteine 2103/cysteine 2114, cysteine 2108/cysteine 2128, and cysteine 2130/cysteine 2139. One can recognise an EGF-like 21 domain in the interval alanine 2099 to glutamate 2140. In terms of domain architecture, Laminin G-like 2 spans leucine 2145–cysteine 2339. N-linked (GlcNAc...) asparagine glycans are attached at residues asparagine 2170, asparagine 2185, and asparagine 2228. Intrachain disulfides connect cysteine 2308/cysteine 2339, cysteine 2339/cysteine 2350, cysteine 2344/cysteine 2359, cysteine 2375/cysteine 2386, cysteine 2380/cysteine 2396, and cysteine 2398/cysteine 2407. 2 EGF-like domains span residues histidine 2335–lysine 2368 and glutamine 2371–threonine 2408. N-linked (GlcNAc...) asparagine glycosylation occurs at asparagine 2347. 5 N-linked (GlcNAc...) asparagine glycosylation sites follow: asparagine 2412, asparagine 2453, asparagine 2484, asparagine 2506, and asparagine 2532. Positions serine 2419–cysteine 2609 constitute a Laminin G-like 3 domain. 3 disulfides stabilise this stretch: cysteine 2576-cysteine 2609, cysteine 2614-cysteine 2625, and cysteine 2619-cysteine 2634. 2 EGF-like domains span residues histidine 2610–threonine 2646 and threonine 2648–glutamate 2689. Asparagine 2635 carries an N-linked (GlcNAc...) asparagine glycan. 4 cysteine pairs are disulfide-bonded: cysteine 2636–cysteine 2645, cysteine 2652–cysteine 2668, cysteine 2662–cysteine 2677, and cysteine 2679–cysteine 2688. Positions aspartate 2717–cysteine 2895 constitute a Laminin G-like 4 domain. N-linked (GlcNAc...) asparagine glycans are attached at residues asparagine 2775, asparagine 2800, and asparagine 2824. 4 disulfides stabilise this stretch: cysteine 2868–cysteine 2895, cysteine 2900–cysteine 2911, cysteine 2905–cysteine 2920, and cysteine 2922–cysteine 2931. 2 EGF-like domains span residues aspartate 2896–asparagine 2932 and glutamine 2933–glutamate 2970. A glycan (N-linked (GlcNAc...) asparagine) is linked at asparagine 2914. Asparagine 2932 is a glycosylation site (N-linked (GlcNAc...) asparagine). Disulfide bonds link cysteine 2937/cysteine 2948, cysteine 2942/cysteine 2958, and cysteine 2960/cysteine 2969. A glycan (N-linked (GlcNAc...) asparagine) is linked at asparagine 2951. Asparagine 2971, asparagine 3006, asparagine 3036, asparagine 3057, asparagine 3073, and asparagine 3082 each carry an N-linked (GlcNAc...) asparagine glycan. Residues phenylalanine 2975–threonine 3164 form the Laminin G-like 5 domain.

The protein belongs to the EYS family.

It is found in the cell projection. The protein localises to the cilium. Its subcellular location is the photoreceptor outer segment. It localises to the cytoplasm. The protein resides in the cytoskeleton. It is found in the cilium axoneme. The protein localises to the microtubule organizing center. Its subcellular location is the centrosome. It localises to the secreted. The protein resides in the extracellular space. It is found in the extracellular matrix. The protein localises to the interphotoreceptor matrix. Its function is as follows. Required to maintain the integrity of photoreceptor cells. Specifically required for normal morphology of the photoreceptor ciliary pocket, and might thus facilitate protein trafficking between the photoreceptor inner and outer segments via the transition zone. The protein is Protein eyes shut homolog (EYS) of Pongo abelii (Sumatran orangutan).